The chain runs to 330 residues: Polyprenol dehydrogenase (330 aa).

Isoleucine 55, tyrosine 208, lysine 212, and threonine 245 together coordinate NAD(+). Tyrosine 208 (proton acceptor) is an active-site residue.

This sequence belongs to the short-chain dehydrogenases/reductases (SDR) family. In terms of tissue distribution, widely expressed. Highly expressed in the pancreas.

It localises to the lipid droplet. Its subcellular location is the secreted. It carries out the reaction a di-trans,poly-cis-polyprenol + NAD(+) = a di-trans,poly-cis-polyprenal + NADH + H(+). The catalysed reaction is a di-trans,poly-cis-polyprenol + NADP(+) = a di-trans,poly-cis-polyprenal + NADPH + H(+). It catalyses the reaction a di-trans,poly-cis-dolichol + NADP(+) = a di-trans,poly-cis-dolichal + NADPH + H(+). The enzyme catalyses a di-trans,poly-cis-dolichol + NAD(+) = a di-trans,poly-cis-dolichal + NADH + H(+). The protein operates within protein modification; protein glycosylation. Functionally, oxidoreductase that plays a key role in early steps of protein N-linked glycosylation by mediating two non-consecutive steps in dolichol biosynthesis. Acts both as a NAD(+)-dependent dehydrogenase and as a NADPH-dependent reductase during the conversion of polyprenol into dolichol. First catalyzes the NAD(+)-dependent dehydrogenation of polyprenol into polyprenal; polyprenal is then reduced into dolichal by SRD5A3. It then catalyzes the NADPH-dependent reduction of dolichal into dolichol. May also acts as a positive regulator of starvation-induced autophagy. In Homo sapiens (Human), this protein is Polyprenol dehydrogenase.